Here is a 150-residue protein sequence, read N- to C-terminus: Avidin-related protein 6 (150 aa).

Positions 1-24 (MVHATSPLLLLLLLSLALVAPGLS) are cleaved as a signal peptide. One can recognise an Avidin-like domain in the interval 26-147 (RKCSLTGEWD…GYNNFTRQRT (122 aa)). A disulfide bridge connects residues Cys28 and Cys105. Asn36 and Ser40 together coordinate biotin. Asn54 is a glycosylation site (N-linked (GlcNAc...) asparagine). Positions 57, 59, and 63 each coordinate biotin. The N-linked (GlcNAc...) asparagine glycan is linked to Asn93. Residues Ser95, Ser99, and Asn140 each contribute to the biotin site. N-linked (GlcNAc...) asparagine glycosylation occurs at Asn141.

It belongs to the avidin/streptavidin family. Homotetramer. In terms of processing, glycosylated.

It localises to the secreted. Functionally, forms a strong non-covalent specific complex with biotin. The protein is Avidin-related protein 6 (AVR6) of Gallus gallus (Chicken).